We begin with the raw amino-acid sequence, 187 residues long: GTP cyclohydrolase 1 (187 aa).

Residues cysteine 76, histidine 79, and cysteine 148 each contribute to the Zn(2+) site.

Belongs to the GTP cyclohydrolase I family. As to quaternary structure, toroid-shaped homodecamer, composed of two pentamers of five dimers.

It carries out the reaction GTP + H2O = 7,8-dihydroneopterin 3'-triphosphate + formate + H(+). It participates in cofactor biosynthesis; 7,8-dihydroneopterin triphosphate biosynthesis; 7,8-dihydroneopterin triphosphate from GTP: step 1/1. This is GTP cyclohydrolase 1 from Streptococcus agalactiae serotype Ia (strain ATCC 27591 / A909 / CDC SS700).